A 299-amino-acid polypeptide reads, in one-letter code: Regucalcin (299 aa).

Glutamate 18 serves as a coordination point for a divalent metal cation. Substrate-binding residues include arginine 101, asparagine 103, and glutamate 121. Lysine 144 is modified (N6-succinyllysine). A divalent metal cation is bound by residues asparagine 154 and aspartate 204. Aspartate 204 (proton donor/acceptor) is an active-site residue. An N6-succinyllysine mark is found at lysine 244 and lysine 253.

The protein belongs to the SMP-30/CGR1 family. As to quaternary structure, monomer. Zn(2+) is required as a cofactor. Requires Mn(2+) as cofactor. It depends on Ca(2+) as a cofactor. The cofactor is Mg(2+).

It localises to the cytoplasm. It catalyses the reaction D-glucono-1,5-lactone + H2O = D-gluconate + H(+). It functions in the pathway cofactor biosynthesis; L-ascorbate biosynthesis via UDP-alpha-D-glucuronate pathway; L-ascorbate from UDP-alpha-D-glucuronate: step 3/4. Functionally, gluconolactonase with low activity towards other sugar lactones, including gulonolactone and galactonolactone. Catalyzes a key step in ascorbic acid (vitamin C) biosynthesis. Can also hydrolyze diisopropyl phosphorofluoridate and phenylacetate (in vitro). Calcium-binding protein. Modulates Ca(2+) signaling, and Ca(2+)-dependent cellular processes and enzyme activities. In Oryctolagus cuniculus (Rabbit), this protein is Regucalcin (RGN).